The primary structure comprises 106 residues: UPF0145 protein CKL_2433 (106 aa).

This sequence belongs to the UPF0145 family.

This is UPF0145 protein CKL_2433 from Clostridium kluyveri (strain ATCC 8527 / DSM 555 / NBRC 12016 / NCIMB 10680 / K1).